Reading from the N-terminus, the 456-residue chain is tRNA modification GTPase MnmE (456 aa).

(6S)-5-formyl-5,6,7,8-tetrahydrofolate is bound by residues R24, E81, and K120. The region spanning 216–379 is the TrmE-type G domain; it reads GMTVVIAGRP…LRDHLKACMG (164 aa). N226 is a K(+) binding site. Residues 226 to 231, 245 to 251, 270 to 273, and 335 to 338 contribute to the GTP site; these read NAGKSS, TEIAGTT, DTAG, and NKAD. S230 contributes to the Mg(2+) binding site. K(+) contacts are provided by T245, I247, and T250. T251 contributes to the Mg(2+) binding site. A (6S)-5-formyl-5,6,7,8-tetrahydrofolate-binding site is contributed by K456.

Belongs to the TRAFAC class TrmE-Era-EngA-EngB-Septin-like GTPase superfamily. TrmE GTPase family. As to quaternary structure, homodimer. Heterotetramer of two MnmE and two MnmG subunits. The cofactor is K(+).

It localises to the cytoplasm. Its function is as follows. Exhibits a very high intrinsic GTPase hydrolysis rate. Involved in the addition of a carboxymethylaminomethyl (cmnm) group at the wobble position (U34) of certain tRNAs, forming tRNA-cmnm(5)s(2)U34. The sequence is that of tRNA modification GTPase MnmE from Pseudomonas fluorescens (strain Pf0-1).